A 121-amino-acid polypeptide reads, in one-letter code: Ribosome-binding factor A (121 aa).

Belongs to the RbfA family. Monomer. Binds 30S ribosomal subunits, but not 50S ribosomal subunits or 70S ribosomes.

The protein resides in the cytoplasm. Functionally, one of several proteins that assist in the late maturation steps of the functional core of the 30S ribosomal subunit. Associates with free 30S ribosomal subunits (but not with 30S subunits that are part of 70S ribosomes or polysomes). Required for efficient processing of 16S rRNA. May interact with the 5'-terminal helix region of 16S rRNA. The sequence is that of Ribosome-binding factor A from Paraburkholderia xenovorans (strain LB400).